The primary structure comprises 88 residues: Sec-independent protein translocase protein TatA (88 aa).

The helical transmembrane segment at 4-24 (LSIWHWLIVLAVVLVLFVGGG) threads the bilayer. The disordered stretch occupies residues 45–88 (ADDETMEGSTGSGGHIAPPGPAAGTVQRDASFSGTGRPSGSSTP). The segment covering 75-88 (SFSGTGRPSGSSTP) has biased composition (low complexity).

It belongs to the TatA/E family. As to quaternary structure, the Tat system comprises two distinct complexes: a TatABC complex, containing multiple copies of TatA, TatB and TatC subunits, and a separate TatA complex, containing only TatA subunits. Substrates initially bind to the TatABC complex, which probably triggers association of the separate TatA complex to form the active translocon.

The protein localises to the cell inner membrane. Functionally, part of the twin-arginine translocation (Tat) system that transports large folded proteins containing a characteristic twin-arginine motif in their signal peptide across membranes. TatA could form the protein-conducting channel of the Tat system. The chain is Sec-independent protein translocase protein TatA from Gluconacetobacter diazotrophicus (strain ATCC 49037 / DSM 5601 / CCUG 37298 / CIP 103539 / LMG 7603 / PAl5).